Reading from the N-terminus, the 232-residue chain is 2,3-bisphosphoglycerate-dependent phosphoglycerate mutase (232 aa).

Substrate-binding positions include 8–15 (RHGESLWN), 21–22 (TG), R60, 87–90 (ERHY), K98, 114–115 (RR), and 183–184 (GN). Catalysis depends on H9, which acts as the Tele-phosphohistidine intermediate. E87 functions as the Proton donor/acceptor in the catalytic mechanism.

The protein belongs to the phosphoglycerate mutase family. BPG-dependent PGAM subfamily.

It carries out the reaction (2R)-2-phosphoglycerate = (2R)-3-phosphoglycerate. It participates in carbohydrate degradation; glycolysis; pyruvate from D-glyceraldehyde 3-phosphate: step 3/5. In terms of biological role, catalyzes the interconversion of 2-phosphoglycerate and 3-phosphoglycerate. This is 2,3-bisphosphoglycerate-dependent phosphoglycerate mutase from Clostridium beijerinckii (strain ATCC 51743 / NCIMB 8052) (Clostridium acetobutylicum).